A 195-amino-acid chain; its full sequence is Inner membrane protein YohC (195 aa).

At 1-32 (MSHVWGLFSHPDREMQVINRENETISHHYTHH) the chain is on the cytoplasmic side. The helical transmembrane segment at 33 to 55 (VLLMAAIPVICAFIGTTQIGWNF) threads the bilayer. The Periplasmic portion of the chain corresponds to 56 to 64 (GDGTILKLS). A helical membrane pass occupies residues 65-87 (WFTGLALAVLFYGVMLAGVAVMG). Residues 88–107 (RVIWWMARNYPQRPSLAHCM) are Cytoplasmic-facing. Residues 108–130 (VFAGYVATPLFLSGLVALYPLVW) traverse the membrane as a helical segment. The Periplasmic portion of the chain corresponds to 131–134 (LCAL). A helical membrane pass occupies residues 135–157 (VGTVALFYTGYLLYLGIPSFLNI). The Cytoplasmic segment spans residues 158-169 (NKEEGLSFSSST). A helical transmembrane segment spans residues 170 to 192 (LAIGVLVLEVLLALTVILWGYGY). At 193-195 (RLF) the chain is on the periplasmic side.

It is found in the cell inner membrane. The chain is Inner membrane protein YohC (yohC) from Escherichia coli O6:H1 (strain CFT073 / ATCC 700928 / UPEC).